Reading from the N-terminus, the 229-residue chain is Ribonuclease 3 (229 aa).

Positions L5–D127 constitute an RNase III domain. E40 is a Mg(2+) binding site. D44 is a catalytic residue. Positions 113 and 116 each coordinate Mg(2+). E116 is an active-site residue. The 71-residue stretch at D154–V224 folds into the DRBM domain.

This sequence belongs to the ribonuclease III family. As to quaternary structure, homodimer. It depends on Mg(2+) as a cofactor.

Its subcellular location is the cytoplasm. It catalyses the reaction Endonucleolytic cleavage to 5'-phosphomonoester.. Digests double-stranded RNA. Involved in the processing of primary rRNA transcript to yield the immediate precursors to the large and small rRNAs (23S and 16S). Processes some mRNAs, and tRNAs when they are encoded in the rRNA operon. Processes pre-crRNA and tracrRNA of type II CRISPR loci if present in the organism. The chain is Ribonuclease 3 from Pseudomonas putida (strain GB-1).